The sequence spans 256 residues: MLRIADKTFDSHLFTGTGKFASSQLMMEAIRASGSQLVTLAMKRVNLRQHNDAILEPLIAAGVTLLPNTSGVKTAEEAIFAAHLAREALGTNWLKLEIHPDARWLLPDPIETLKAAETLVQQGFVVLPYCGADPVLCKRLEEVGCAAVMPLGAPIGSNQGLETRAMLEIIIQQATVPVVVDAGIGVPSHAAQALEMGADAVLVNTAIAVADDPVNMAKAFRLAVDAGLLARQSGPGSRSHFAHATSPLTGFLEASA.

The Schiff-base intermediate with DXP role is filled by Lys-95. 1-deoxy-D-xylulose 5-phosphate-binding positions include Gly-156, Ala-182 to Gly-183, and Asn-204 to Thr-205.

This sequence belongs to the ThiG family. As to quaternary structure, homotetramer. Forms heterodimers with either ThiH or ThiS.

It localises to the cytoplasm. The catalysed reaction is [ThiS sulfur-carrier protein]-C-terminal-Gly-aminoethanethioate + 2-iminoacetate + 1-deoxy-D-xylulose 5-phosphate = [ThiS sulfur-carrier protein]-C-terminal Gly-Gly + 2-[(2R,5Z)-2-carboxy-4-methylthiazol-5(2H)-ylidene]ethyl phosphate + 2 H2O + H(+). It functions in the pathway cofactor biosynthesis; thiamine diphosphate biosynthesis. In terms of biological role, catalyzes the rearrangement of 1-deoxy-D-xylulose 5-phosphate (DXP) to produce the thiazole phosphate moiety of thiamine. Sulfur is provided by the thiocarboxylate moiety of the carrier protein ThiS. In vitro, sulfur can be provided by H(2)S. In Escherichia coli O7:K1 (strain IAI39 / ExPEC), this protein is Thiazole synthase.